The chain runs to 255 residues: Ribonuclease PH (255 aa).

Phosphate is bound by residues Arg86 and 124 to 126 (GTR).

This sequence belongs to the RNase PH family. As to quaternary structure, homohexameric ring arranged as a trimer of dimers.

It catalyses the reaction tRNA(n+1) + phosphate = tRNA(n) + a ribonucleoside 5'-diphosphate. Functionally, phosphorolytic 3'-5' exoribonuclease that plays an important role in tRNA 3'-end maturation. Removes nucleotide residues following the 3'-CCA terminus of tRNAs; can also add nucleotides to the ends of RNA molecules by using nucleoside diphosphates as substrates, but this may not be physiologically important. Probably plays a role in initiation of 16S rRNA degradation (leading to ribosome degradation) during starvation. The protein is Ribonuclease PH of Hydrogenobaculum sp. (strain Y04AAS1).